Consider the following 185-residue polypeptide: Large ribosomal subunit protein bL25 (185 aa).

The protein belongs to the bacterial ribosomal protein bL25 family. CTC subfamily. As to quaternary structure, part of the 50S ribosomal subunit; part of the 5S rRNA/L5/L18/L25 subcomplex. Contacts the 5S rRNA. Binds to the 5S rRNA independently of L5 and L18.

In terms of biological role, this is one of the proteins that binds to the 5S RNA in the ribosome where it forms part of the central protuberance. This Microcystis aeruginosa (strain NIES-843 / IAM M-2473) protein is Large ribosomal subunit protein bL25.